A 482-amino-acid polypeptide reads, in one-letter code: Glutamyl-tRNA(Gln) amidotransferase subunit A (482 aa).

Catalysis depends on charge relay system residues lysine 81 and serine 156. Serine 180 acts as the Acyl-ester intermediate in catalysis.

This sequence belongs to the amidase family. GatA subfamily. In terms of assembly, heterotrimer of A, B and C subunits.

It carries out the reaction L-glutamyl-tRNA(Gln) + L-glutamine + ATP + H2O = L-glutaminyl-tRNA(Gln) + L-glutamate + ADP + phosphate + H(+). In terms of biological role, allows the formation of correctly charged Gln-tRNA(Gln) through the transamidation of misacylated Glu-tRNA(Gln) in organisms which lack glutaminyl-tRNA synthetase. The reaction takes place in the presence of glutamine and ATP through an activated gamma-phospho-Glu-tRNA(Gln). This chain is Glutamyl-tRNA(Gln) amidotransferase subunit A, found in Brachyspira hyodysenteriae (strain ATCC 49526 / WA1).